Here is a 319-residue protein sequence, read N- to C-terminus: tRNA pseudouridine synthase B (319 aa).

Catalysis depends on Asp-49, which acts as the Nucleophile.

The protein belongs to the pseudouridine synthase TruB family. Type 1 subfamily.

It catalyses the reaction uridine(55) in tRNA = pseudouridine(55) in tRNA. Responsible for synthesis of pseudouridine from uracil-55 in the psi GC loop of transfer RNAs. This Bartonella henselae (strain ATCC 49882 / DSM 28221 / CCUG 30454 / Houston 1) (Rochalimaea henselae) protein is tRNA pseudouridine synthase B.